Here is a 330-residue protein sequence, read N- to C-terminus: Putative zinc finger protein CONSTANS-LIKE 11 (330 aa).

The Zn(2+) site is built by Cys-5, Cys-8, Cys-28, and His-33. Residues 5–47 (CDFCGTEKALIYCKSDSAKLCLNCDVNVHSANPLSQRHTRSLL) form a B box-type 1; atypical zinc finger. Residues 48–88 (CEKCSLQPTAVHCMNENVSLCQGCQWTASNCTGLGHRLQSL) form a B box-type 2; degenerate zinc finger. Positions 276 to 318 (RDEAKKRYKQKKSKRMFGKQIRYASRKARADTRKRVKGRFVKS) constitute a CCT domain.

Belongs to the CONSTANS family.

Its subcellular location is the nucleus. The polypeptide is Putative zinc finger protein CONSTANS-LIKE 11 (COL11) (Arabidopsis thaliana (Mouse-ear cress)).